Reading from the N-terminus, the 164-residue chain is Pyruvoyl-dependent arginine decarboxylase (164 aa).

Ser-52 carries the post-translational modification Pyruvic acid (Ser).

This sequence belongs to the PdaD family. Requires pyruvate as cofactor.

It carries out the reaction L-arginine + H(+) = agmatine + CO2. This chain is Pyruvoyl-dependent arginine decarboxylase, found in Methanococcus vannielii (strain ATCC 35089 / DSM 1224 / JCM 13029 / OCM 148 / SB).